Consider the following 386-residue polypeptide: Manganese dependent endoglucanase Eg5A (386 aa).

An N-terminal signal peptide occupies residues 1–17 (MLKYASIALALATLGVA). The region spanning 18–53 (QQQQWGQCGGIGWTGATTCVAGSVCSVLNPYYSQCI) is the CBM1 domain. The Proton donor role is filled by glutamate 209. Catalysis depends on glutamate 319, which acts as the Nucleophile. Asparagine 324 is a glycosylation site (N-linked (GlcNAc...) asparagine).

It belongs to the glycosyl hydrolase 5 (cellulase A) family. Mn(2+) serves as cofactor.

The protein localises to the secreted. The enzyme catalyses Endohydrolysis of (1-&gt;4)-beta-D-glucosidic linkages in cellulose, lichenin and cereal beta-D-glucans.. Secreted manganese dependent endoglucanase that acts by cleaving the beta-1,4-glucose linkage. Exhibits high activity toward carboxymethyl-cellulose (CMC), barley glucan, and glucomannan. Displays low activity on larminarin and xyloglucan but does not hydrolyze hemicellulose substrates such as birchwood xylan, arabinoxylan, and arabinan. In Phanerodontia chrysosporium (White-rot fungus), this protein is Manganese dependent endoglucanase Eg5A.